A 699-amino-acid chain; its full sequence is Bifunctional protein GAL10 (699 aa).

Positions 1–357 (MTAQLQSEST…TTENPFGYQL (357 aa)) are galactowaldenase. 13–44 (IVLVTGGAGYIGSHTVVELIENGYDCVVADNL) is a binding site for NAD(+). The segment at 358–699 (RGVEARFSAE…YGSKIVYRFS (342 aa)) is mutarotase. The For mutarotase activity role is filled by His537. Ser562 is subject to Phosphoserine.

This sequence in the N-terminal section; belongs to the NAD(P)-dependent epimerase/dehydratase family. It in the C-terminal section; belongs to the aldose epimerase family. The cofactor is NAD(+).

The catalysed reaction is UDP-alpha-D-glucose = UDP-alpha-D-galactose. It catalyses the reaction alpha-D-glucose = beta-D-glucose. It functions in the pathway carbohydrate metabolism; galactose metabolism. The protein operates within carbohydrate metabolism; hexose metabolism. Mutarotase converts alpha-aldose to the beta-anomer. It is active on D-glucose, L-arabinose, D-xylose, D-galactose, maltose and lactose. The chain is Bifunctional protein GAL10 (GAL10) from Saccharomyces cerevisiae (strain ATCC 204508 / S288c) (Baker's yeast).